Here is a 206-residue protein sequence, read N- to C-terminus: Large ribosomal subunit protein uL4 (206 aa).

A disordered region spans residues 51-96 (LTRAEVKHSTKKPFRQKGTGNARAGMTSTPNRRGGGRAFPNKPDEN).

The protein belongs to the universal ribosomal protein uL4 family. In terms of assembly, part of the 50S ribosomal subunit.

In terms of biological role, one of the primary rRNA binding proteins, this protein initially binds near the 5'-end of the 23S rRNA. It is important during the early stages of 50S assembly. It makes multiple contacts with different domains of the 23S rRNA in the assembled 50S subunit and ribosome. Forms part of the polypeptide exit tunnel. The protein is Large ribosomal subunit protein uL4 of Chromobacterium violaceum (strain ATCC 12472 / DSM 30191 / JCM 1249 / CCUG 213 / NBRC 12614 / NCIMB 9131 / NCTC 9757 / MK).